Consider the following 390-residue polypeptide: GTPase Obg (390 aa).

In terms of domain architecture, Obg spans 1–159 (MKFVDEASIL…RDLMLELMLL (159 aa)). Residues 127 to 147 (NTRFKSSVNRTPRQKTMGTPG) form a disordered region. The span at 129 to 143 (RFKSSVNRTPRQKTM) shows a compositional bias: polar residues. One can recognise an OBG-type G domain in the interval 160-333 (ADVGMLGMPN…LCWDVMTFII (174 aa)). Residues 166–173 (GMPNAGKS), 191–195 (FTTLV), 213–216 (DIPG), 283–286 (NKID), and 314–316 (SAA) each bind GTP. Positions 173 and 193 each coordinate Mg(2+).

The protein belongs to the TRAFAC class OBG-HflX-like GTPase superfamily. OBG GTPase family. As to quaternary structure, monomer. Mg(2+) is required as a cofactor.

The protein localises to the cytoplasm. Functionally, an essential GTPase which binds GTP, GDP and possibly (p)ppGpp with moderate affinity, with high nucleotide exchange rates and a fairly low GTP hydrolysis rate. Plays a role in control of the cell cycle, stress response, ribosome biogenesis and in those bacteria that undergo differentiation, in morphogenesis control. This chain is GTPase Obg, found in Citrobacter koseri (strain ATCC BAA-895 / CDC 4225-83 / SGSC4696).